The sequence spans 341 residues: Glucokinase (341 aa).

Position 18 to 23 (18 to 23 (GDIGGT)) interacts with ATP.

This sequence belongs to the bacterial glucokinase family.

It is found in the cytoplasm. The catalysed reaction is D-glucose + ATP = D-glucose 6-phosphate + ADP + H(+). The sequence is that of Glucokinase from Rhizobium leguminosarum bv. trifolii (strain WSM2304).